Reading from the N-terminus, the 612-residue chain is Arginine--tRNA ligase (612 aa).

Positions 152–162 (PNIAKEMHVGH) match the 'HIGH' region motif.

Belongs to the class-I aminoacyl-tRNA synthetase family. Monomer.

The protein localises to the cytoplasm. The enzyme catalyses tRNA(Arg) + L-arginine + ATP = L-arginyl-tRNA(Arg) + AMP + diphosphate. The sequence is that of Arginine--tRNA ligase from Prochlorococcus marinus (strain MIT 9313).